Reading from the N-terminus, the 213-residue chain is Small ribosomal subunit protein uS3c (213 aa).

The 71-residue stretch at 39-109 folds into the KH type-2 domain; sequence IRKYLNAKLA…KFRITITYLQ (71 aa).

It belongs to the universal ribosomal protein uS3 family. In terms of assembly, part of the 30S ribosomal subunit.

It localises to the plastid. It is found in the chloroplast. This is Small ribosomal subunit protein uS3c (rps3) from Mesostigma viride (Green alga).